Consider the following 402-residue polypeptide: Metacaspase-1 (402 aa).

Residues 1-79 (MAYPGQGGHH…FAPPSGPIGP (79 aa)) are disordered. Over residues 23–45 (PAPHGYAQPGYGYAPPSGPPQGY) the composition is skewed to low complexity. Active-site residues include His193 and Cys249.

Belongs to the peptidase C14B family.

Involved in cell death (apoptosis). This Mycosarcoma maydis (Corn smut fungus) protein is Metacaspase-1 (MCA1).